A 336-amino-acid chain; its full sequence is MATLHAPAFELPEILNTKTNLADARIGAQVIECSDDFFAEAKRMLQFEAPIFVEDKFDDHGKWMDGWETRRKRHAGYDWCIVKLGVSGKISALDIDTTFFTGNYPASASLEACYAPNGDLTGAKWQSILENTELGPSQHHIFMVNNDAIFTHIRLNIFPDGGVARLRVYGDVHIQVTDHEQTLDLLALENGGRVIAYSDAHFGHPRNLINPGRGVNMGDGWETKRRRAPGYDWCILALGKSGKIEKIEIDTAHFKGNFPAEVSIQAVYLENATDAQLIPQSMFWSYLLEAQPMQMDHIHEYVNEILQYEKVSHIRINMIPDGGISRVRLWGKIAKS.

This sequence belongs to the allantoicase family.

The catalysed reaction is allantoate + H2O = (S)-ureidoglycolate + urea. The protein operates within nitrogen metabolism; (S)-allantoin degradation; (S)-ureidoglycolate from allantoate (aminidohydrolase route): step 1/1. The chain is Probable allantoicase from Acinetobacter baumannii (strain ATCC 17978 / DSM 105126 / CIP 53.77 / LMG 1025 / NCDC KC755 / 5377).